We begin with the raw amino-acid sequence, 316 residues long: Golgi to ER traffic protein 2 (316 aa).

Residues 1-75 are disordered; it reads MATELSDAEK…SDEEVEKSTK (75 aa). The Cytoplasmic portion of the chain corresponds to 1 to 167; sequence MATELSDAEK…LKYYKFKVSK (167 aa). Basic and acidic residues predominate over residues 7 to 19; that stretch reads DAEKRKLLRERRQ. Composition is skewed to polar residues over residues 22–48 and 56–65; these read FSNG…STSV and PSGNKKSSNV. Residues 168 to 187 traverse the membrane as a helical segment; sequence LKSYIILIKWALLAPYVYFI. The Lumenal portion of the chain corresponds to 188-209; the sequence is MHPNPTVLQASNLLSQIVERSN. Residues 210–229 form a helical membrane-spanning segment; that stretch reads FFSIFTGLEIVFISIYYQML. Residues 230–276 are Cytoplasmic-facing; that stretch reads KKLQRDNNVTATQNAGGILKYLTMIPEGILPIRNIQGKIGLALEYFD. A helical transmembrane segment spans residues 277 to 297; that stretch reads VASMYVTDICFVLVLFGVMKY. Residues 298-316 lie on the Lumenal side of the membrane; the sequence is YHSSFPISVPIEPPIAGIQ.

It belongs to the GET2 family. As to quaternary structure, component of the Golgi to ER traffic (GET) complex, which is composed of GET1, GET2 and GET3. Within the complex, GET1 and GET2 form a heterotetramer which is stabilized by phosphatidylinositol binding and which binds to the GET3 homodimer.

Its subcellular location is the endoplasmic reticulum membrane. It localises to the golgi apparatus membrane. Functionally, required for the post-translational delivery of tail-anchored (TA) proteins to the endoplasmic reticulum. Together with GET1, acts as a membrane receptor for soluble GET3, which recognizes and selectively binds the transmembrane domain of TA proteins in the cytosol. The GET complex cooperates with the HDEL receptor ERD2 to mediate the ATP-dependent retrieval of resident ER proteins that contain a C-terminal H-D-E-L retention signal from the Golgi to the ER. The protein is Golgi to ER traffic protein 2 of Kluyveromyces lactis (strain ATCC 8585 / CBS 2359 / DSM 70799 / NBRC 1267 / NRRL Y-1140 / WM37) (Yeast).